A 445-amino-acid polypeptide reads, in one-letter code: MSERKFFGTDGIRGKVGSGQMTPELALKLGWAAGRVLSRSGTNKVIIGKDTRISGYMFESALEAGLSAAGLNVMLMGPMPTPAVAYLTRTFRAEAGVVISASHNPYYDNGIKFFSNDGSKLDDNLELEIEAELEKPLECVESHLLGKVSRIEDARGRYIEYCKGNFPADQTLTGLKIVVDCAHGATYHIAPAVFRELGAEVIAIGDKPNGVNINDKVGATSMAKICETVLTEGADLGIALDGDGDRIMMVNSRGEVIDGDQILYILACDAKARGVLRGGVVGTLMSNLGLDLALQALDIPFARSKVGDRYVMELLKELDWRIGGENSGHILNLDHGTTGDGIVAGILVLAAMRRQNATLEQLTAPMEMLPQVLVNVRFEGEHDPLSSDKVKAAQALVESQLGARGRVLLRKSGTEPLIRVMVEGDDHNTVLAHANLIADAVKSAS.

S102 acts as the Phosphoserine intermediate in catalysis. Mg(2+) contacts are provided by S102, D241, D243, and D245. S102 is subject to Phosphoserine.

Belongs to the phosphohexose mutase family. Mg(2+) is required as a cofactor. In terms of processing, activated by phosphorylation.

The enzyme catalyses alpha-D-glucosamine 1-phosphate = D-glucosamine 6-phosphate. Functionally, catalyzes the conversion of glucosamine-6-phosphate to glucosamine-1-phosphate. This Shewanella sp. (strain MR-4) protein is Phosphoglucosamine mutase 1.